A 786-amino-acid chain; its full sequence is LPS-assembly protein LptD (786 aa).

Positions 1-39 (MPPKPLFPNVFPGDGAPRKRRLALALLAVPGLVPAVSYA) are cleaved as a signal peptide.

The protein belongs to the LptD family. Component of the lipopolysaccharide transport and assembly complex. Interacts with LptE and LptA.

The protein localises to the cell outer membrane. Functionally, together with LptE, is involved in the assembly of lipopolysaccharide (LPS) at the surface of the outer membrane. The polypeptide is LPS-assembly protein LptD (Burkholderia ambifaria (strain ATCC BAA-244 / DSM 16087 / CCUG 44356 / LMG 19182 / AMMD) (Burkholderia cepacia (strain AMMD))).